We begin with the raw amino-acid sequence, 442 residues long: tRNA modification GTPase MnmE (442 aa).

(6S)-5-formyl-5,6,7,8-tetrahydrofolate is bound by residues Arg21, Glu79, and Lys118. Positions 214–367 constitute a TrmE-type G domain; sequence GFKIAIVGKP…LKEELQNYLN (154 aa). A K(+)-binding site is contributed by Asn224. GTP contacts are provided by residues 224 to 229, 243 to 249, and 268 to 271; these read NVGKSS, SDIAGTT, and DTAG. Residue Ser228 participates in Mg(2+) binding. K(+) is bound by residues Ser243, Ile245, and Thr248. Thr249 contributes to the Mg(2+) binding site. Lys442 contributes to the (6S)-5-formyl-5,6,7,8-tetrahydrofolate binding site.

The protein belongs to the TRAFAC class TrmE-Era-EngA-EngB-Septin-like GTPase superfamily. TrmE GTPase family. Homodimer. Heterotetramer of two MnmE and two MnmG subunits. K(+) serves as cofactor.

Its subcellular location is the cytoplasm. Exhibits a very high intrinsic GTPase hydrolysis rate. Involved in the addition of a carboxymethylaminomethyl (cmnm) group at the wobble position (U34) of certain tRNAs, forming tRNA-cmnm(5)s(2)U34. This is tRNA modification GTPase MnmE from Campylobacter jejuni subsp. jejuni serotype O:23/36 (strain 81-176).